The chain runs to 127 residues: MIKKIIFGIAILLSTSCFANSTTSDGSKKDAAKTNDITTQKIIDDFSAYAGTIKPEVREEIQKYRVAIVKINKKKRELYNRLSKEAQNFLAEQQKYKQKLSISKLTVENDQKNNTADSNDNKSKDTK.

Positions 1–16 (MIKKIIFGIAILLSTS) are cleaved as a signal peptide. C17 carries the N-palmitoyl cysteine lipid modification. C17 is lipidated: S-diacylglycerol cysteine. A coiled-coil region spans residues 56–101 (EVREEIQKYRVAIVKINKKKRELYNRLSKEAQNFLAEQQKYKQKLS). Positions 107–118 (VENDQKNNTADS) are enriched in polar residues. The disordered stretch occupies residues 107-127 (VENDQKNNTADSNDNKSKDTK).

It is found in the cell membrane. This is an uncharacterized protein from Rickettsia conorii (strain ATCC VR-613 / Malish 7).